A 333-amino-acid polypeptide reads, in one-letter code: Glycerol-3-phosphate dehydrogenase [NAD(P)+] 2 (333 aa).

The NADPH site is built by Ser-12, Trp-13, Arg-32, and Lys-106. Residues Lys-106 and Gly-134 each contribute to the sn-glycerol 3-phosphate site. Ala-138 contacts NADPH. Sn-glycerol 3-phosphate-binding residues include Lys-189, Asp-242, Ser-252, Arg-253, and Asn-254. The active-site Proton acceptor is the Lys-189. An NADPH-binding site is contributed by Arg-253. Residues Val-277 and Glu-279 each coordinate NADPH.

Belongs to the NAD-dependent glycerol-3-phosphate dehydrogenase family.

The protein localises to the cytoplasm. It carries out the reaction sn-glycerol 3-phosphate + NAD(+) = dihydroxyacetone phosphate + NADH + H(+). The catalysed reaction is sn-glycerol 3-phosphate + NADP(+) = dihydroxyacetone phosphate + NADPH + H(+). The protein operates within membrane lipid metabolism; glycerophospholipid metabolism. Its function is as follows. Catalyzes the reduction of the glycolytic intermediate dihydroxyacetone phosphate (DHAP) to sn-glycerol 3-phosphate (G3P), the key precursor for phospholipid synthesis. The chain is Glycerol-3-phosphate dehydrogenase [NAD(P)+] 2 from Sphingopyxis alaskensis (strain DSM 13593 / LMG 18877 / RB2256) (Sphingomonas alaskensis).